Reading from the N-terminus, the 243-residue chain is Small ribosomal subunit protein uS3 (243 aa).

In terms of domain architecture, KH type-2 spans 39 to 107; it reads LRKLISKELQ…KIKLNIKEIH (69 aa). Residues 212–243 form a disordered region; that stretch reads VAKSPAEPATTAPTPAPERRERQPRRNSNASA.

The protein belongs to the universal ribosomal protein uS3 family. Part of the 30S ribosomal subunit. Forms a tight complex with proteins S10 and S14.

In terms of biological role, binds the lower part of the 30S subunit head. Binds mRNA in the 70S ribosome, positioning it for translation. The chain is Small ribosomal subunit protein uS3 from Chloroflexus aurantiacus (strain ATCC 29364 / DSM 637 / Y-400-fl).